A 668-amino-acid chain; its full sequence is MEGPTHPKPSKDKTFSWDLIILVGVLLRLDAGMANPSPHQVYNITWTITNLVTGIKANATSMLGTLTDTFPTIYFDLCDIIGNTWNPSDQEPFPGYGCDQPMRRWQQRNTAFYVCPGHANRKQCGGPQDGFCAVWGCETTGETYWKPTSSWDYITVKKGVTQGIYQCNGGGWCGPCYDKAVHSSTTGASEGGRCNPLILQFTQKGRQTSWDGPKSWGLRLYRSGYDPIALFSVSRQVMTITPPQAMGPNPVLPDQKPPSRQSQIESRVIPHHPQGNGGTPGITLVNASIAPLSTPVTPASPKRIGTGNRLINLVQGTYLTLNVTNPNKTKDCWLCLVSRPPYYEGIAVLGNYSNQTNPPPSCLSVPQHKLTISEVSGQGLCIATVPKTHQALCNKTQKGHRGTHYLVAPNGTYWACNTGLTPCISMAVLNWTSDFCVLTELWPRITYHEPEYIYSHFENKPRFKRDPISLTVALMLGGITVGGMARNRNRDCGLLETAQFRQLQMAMHTDIQALEESISALEKSLTSLSEVVLQNRRGLDILFLQEGGLCTALKEECCFYADHTGLVRDNMAKLRERLKQRQQLFDSQQDGLEGWFNKSPWFTTLISSIMGPLMILLLILLFGPCILNRLVQFVKDRISVVQTLVLTQQYQRLGQWRLRPTVSPQLNV.

Positions 1-34 (MEGPTHPKPSKDKTFSWDLIILVGVLLRLDAGMA) are cleaved as a signal peptide. The Extracellular portion of the chain corresponds to 35–605 (NPSPHQVYNI…FNKSPWFTTL (571 aa)). Residues N43 and N58 are each glycosylated (N-linked (GlcNAc...) asparagine; by host). 2 disulfide bridges follow: C115–C132 and C124–C137. The tract at residues 243–264 (PQAMGPNPVLPDQKPPSRQSQI) is disordered. N-linked (GlcNAc...) asparagine; by host glycosylation is found at N286, N322, and N327. Cystine bridges form between C332-C335, C332-C558, and C550-C557. Positions 332–335 (CWLC) match the CXXC motif. N-linked (GlcNAc...) asparagine; by host glycans are attached at residues N351, N354, N394, N410, and N430. Residues 467–487 (PISLTVALMLGGITVGGMARN) form a fusion peptide region. Coiled-coil stretches lie at residues 495–544 (LETA…ILFL) and 554–590 (KEECCFYADHTGLVRDNMAKLRERLKQRQQLFDSQQD). An immunosuppression region spans residues 533–549 (LQNRRGLDILFLQEGGL). The CX6CC signature appears at 550–558 (CTALKEECC). The chain crosses the membrane as a helical span at residues 606–626 (ISSIMGPLMILLLILLFGPCI). C625 carries S-palmitoyl cysteine; by host lipidation. The Cytoplasmic segment spans residues 627 to 668 (LNRLVQFVKDRISVVQTLVLTQQYQRLGQWRLRPTVSPQLNV). The YXXL motif; contains endocytosis signal motif lies at 650-653 (YQRL).

The mature envelope protein (Env) consists of a trimer of SU-TM heterodimers attached by a labile interchain disulfide bond. In terms of processing, specific enzymatic cleavages in vivo yield mature proteins. Envelope glycoproteins are synthesized as an inactive precursor that is N-glycosylated and processed likely by host cell furin or by a furin-like protease in the Golgi to yield the mature SU and TM proteins. The cleavage site between SU and TM requires the minimal sequence [KR]-X-[KR]-R. The R-peptide is released from the C-terminus of the cytoplasmic tail of the TM protein upon particle formation as a result of proteolytic cleavage by the viral protease. Cleavage of this peptide is required for TM to become fusogenic. The CXXC motif is highly conserved across a broad range of retroviral envelope proteins. It is thought to participate in the formation of a labile disulfide bond possibly with the CX6CC motif present in the transmembrane protein. Isomerization of the intersubunit disulfide bond to an SU intrachain disulfide bond is thought to occur upon receptor recognition in order to allow membrane fusion. Post-translationally, the transmembrane protein is palmitoylated. In terms of processing, the R-peptide is palmitoylated.

The protein resides in the virion membrane. It localises to the host cell membrane. Its function is as follows. The surface protein (SU) attaches the virus to the host cell by binding to its receptor. This interaction triggers the refolding of the transmembrane protein (TM) and is thought to activate its fusogenic potential by unmasking its fusion peptide. Fusion occurs at the host cell plasma membrane. In terms of biological role, the transmembrane protein (TM) acts as a class I viral fusion protein. Under the current model, the protein has at least 3 conformational states: pre-fusion native state, pre-hairpin intermediate state, and post-fusion hairpin state. During viral and target cell membrane fusion, the coiled coil regions (heptad repeats) assume a trimer-of-hairpins structure, positioning the fusion peptide in close proximity to the C-terminal region of the ectodomain. The formation of this structure appears to drive apposition and subsequent fusion of viral and target cell membranes. Membranes fusion leads to delivery of the nucleocapsid into the cytoplasm. The sequence is that of Envelope glycoprotein (env) from Felidae (cat family).